A 275-amino-acid polypeptide reads, in one-letter code: NH(3)-dependent NAD(+) synthetase (275 aa).

46–53 lines the ATP pocket; that stretch reads GISGGQDS. D52 contacts Mg(2+). R140 contacts deamido-NAD(+). T160 contributes to the ATP binding site. Residue E165 coordinates Mg(2+). Deamido-NAD(+) contacts are provided by K173 and D180. ATP-binding residues include K189 and T211. Deamido-NAD(+) is bound at residue 260–261; it reads HK.

Belongs to the NAD synthetase family. As to quaternary structure, homodimer.

It catalyses the reaction deamido-NAD(+) + NH4(+) + ATP = AMP + diphosphate + NAD(+) + H(+). Its pathway is cofactor biosynthesis; NAD(+) biosynthesis; NAD(+) from deamido-NAD(+) (ammonia route): step 1/1. Catalyzes the ATP-dependent amidation of deamido-NAD to form NAD. Uses ammonia as a nitrogen source. The sequence is that of NH(3)-dependent NAD(+) synthetase from Escherichia coli O6:K15:H31 (strain 536 / UPEC).